The sequence spans 360 residues: DNA replication and repair protein RecF (360 aa).

30-37 is an ATP binding site; sequence GQNGSGKT.

This sequence belongs to the RecF family.

The protein resides in the cytoplasm. Functionally, the RecF protein is involved in DNA metabolism; it is required for DNA replication and normal SOS inducibility. RecF binds preferentially to single-stranded, linear DNA. It also seems to bind ATP. The protein is DNA replication and repair protein RecF of Shewanella putrefaciens (strain CN-32 / ATCC BAA-453).